A 471-amino-acid chain; its full sequence is V-type ATP synthase beta chain (471 aa).

It belongs to the ATPase alpha/beta chains family.

Functionally, produces ATP from ADP in the presence of a proton gradient across the membrane. The V-type beta chain is a regulatory subunit. This is V-type ATP synthase beta chain from Streptococcus pyogenes serotype M18 (strain MGAS8232).